Reading from the N-terminus, the 1233-residue chain is Mitogen-activated protein kinase kinase kinase kinase 4 (1233 aa).

Residue A2 is modified to N-acetylalanine. A Phosphoserine modification is found at S5. Residues 25-289 enclose the Protein kinase domain; it reads FELVEVVGNG…EQLLKHPFIR (265 aa). ATP contacts are provided by residues 31–39 and K53; that span reads VGNGTYGQV. D152 (proton acceptor) is an active-site residue. 3 disordered regions span residues 305–348, 401–463, and 489–805; these read IDRT…VPGE, QKEQ…VERE, and QAML…ETES. Residues 316–337 show a composition bias toward acidic residues; the sequence is DETEYEYSGSEEEEEEVPEQEG. Residues S323 and S325 each carry the phosphoserine modification. A compositionally biased stretch (basic and acidic residues) spans 521 to 537; sequence PEPKPHYDPADRAREVQ. S543 is subject to Phosphoserine. Residues 544-559 are compositionally biased toward polar residues; sequence LKNNVSPVSRSHSFSD. S619, S621, S629, and S646 each carry phosphoserine. The span at 654 to 663 shows a compositional bias: basic and acidic residues; that stretch reads LLWERVEKLV. Low complexity predominate over residues 666-692; that stretch reads PGSGSSSGSSNSGSQPGSHPGSQSGSG. S691, S703, and S706 each carry phosphoserine. 2 stretches are compositionally biased toward basic and acidic residues: residues 713-726 and 741-756; these read SAAKKPDDKKEVFR and KELRAVEDVRPPHKVT. The segment covering 766–781 has biased composition (acidic residues); the sequence is GTTDEEEEDVEQEGAD. Residues 783–803 show a composition bias toward polar residues; it reads STSGPEDTRAASSPNLSNGET. Residues S785, S794, S795, S799, and S817 each carry the phosphoserine modification. Phosphothreonine is present on T822. Phosphoserine is present on residues S846, S849, S894, and S907. Residues 852–1206 form a mediates interaction with RAP2A region; the sequence is PFIDPRLLQI…LKFLCGRNDK (355 aa). Residues 920–1207 form the CNH domain; it reads NSEILCAALW…KFLCGRNDKV (288 aa).

It belongs to the protein kinase superfamily. STE Ser/Thr protein kinase family. STE20 subfamily. As to quaternary structure, interacts with the SH3 domain of the adapter proteins Nck. Interacts (via its CNH regulatory domain) with ATL1 (via the N-terminal region). Interacts with RAP2A (GTP-bound form preferentially). Mg(2+) serves as cofactor. As to expression, appears to be ubiquitous, expressed in all tissue types examined. Highest levels observed in heart and brain.

Its subcellular location is the cytoplasm. It carries out the reaction L-seryl-[protein] + ATP = O-phospho-L-seryl-[protein] + ADP + H(+). The catalysed reaction is L-threonyl-[protein] + ATP = O-phospho-L-threonyl-[protein] + ADP + H(+). Functionally, serine/threonine kinase that plays a role in the response to environmental stress and cytokines such as TNF-alpha. Appears to act upstream of the JUN N-terminal pathway. Activator of the Hippo signaling pathway which plays a pivotal role in organ size control and tumor suppression by restricting proliferation and promoting apoptosis. MAP4Ks act in parallel to and are partially redundant with STK3/MST2 and STK4/MST2 in the phosphorylation and activation of LATS1/2, and establish MAP4Ks as components of the expanded Hippo pathway. Phosphorylates SMAD1 on Thr-322. The polypeptide is Mitogen-activated protein kinase kinase kinase kinase 4 (Map4k4) (Mus musculus (Mouse)).